The chain runs to 433 residues: UDP-N-acetylglucosamine 1-carboxyvinyltransferase (433 aa).

Phosphoenolpyruvate is bound at residue 22 to 23; the sequence is KN. A UDP-N-acetyl-alpha-D-glucosamine-binding site is contributed by R96. Residue C120 is the Proton donor of the active site. C120 bears the 2-(S-cysteinyl)pyruvic acid O-phosphothioketal mark. UDP-N-acetyl-alpha-D-glucosamine contacts are provided by residues 125–129, D308, and I330; that span reads RPIDL.

The protein belongs to the EPSP synthase family. MurA subfamily.

Its subcellular location is the cytoplasm. It catalyses the reaction phosphoenolpyruvate + UDP-N-acetyl-alpha-D-glucosamine = UDP-N-acetyl-3-O-(1-carboxyvinyl)-alpha-D-glucosamine + phosphate. It participates in cell wall biogenesis; peptidoglycan biosynthesis. Its function is as follows. Cell wall formation. Adds enolpyruvyl to UDP-N-acetylglucosamine. The sequence is that of UDP-N-acetylglucosamine 1-carboxyvinyltransferase from Koribacter versatilis (strain Ellin345).